Here is a 209-residue protein sequence, read N- to C-terminus: Eukaryotic translation initiation factor 4E (209 aa).

The protein belongs to the eukaryotic initiation factor 4E family. In terms of assembly, eIF4F is a multi-subunit complex, the composition of which varies with external and internal environmental conditions. It is composed of at least eIF4A, eIF4E and eIF4G. eIF4E is also known to interact with other partners.

In terms of biological role, recognizes and binds the 7-methylguanosine-containing mRNA cap during an early step in the initiation of protein synthesis and facilitates ribosome binding by inducing the unwinding of the mRNAs secondary structures. This chain is Eukaryotic translation initiation factor 4E (TIF45), found in Candida glabrata (strain ATCC 2001 / BCRC 20586 / JCM 3761 / NBRC 0622 / NRRL Y-65 / CBS 138) (Yeast).